Here is a 358-residue protein sequence, read N- to C-terminus: Methylthioribose-1-phosphate isomerase (358 aa).

At Met1 the chain carries N-acetylmethionine. Catalysis depends on Asp248, which acts as the Proton donor.

Belongs to the eIF-2B alpha/beta/delta subunits family. MtnA subfamily.

The protein localises to the cytoplasm. The protein resides in the nucleus. It catalyses the reaction 5-(methylsulfanyl)-alpha-D-ribose 1-phosphate = 5-(methylsulfanyl)-D-ribulose 1-phosphate. The protein operates within amino-acid biosynthesis; L-methionine biosynthesis via salvage pathway; L-methionine from S-methyl-5-thio-alpha-D-ribose 1-phosphate: step 1/6. Its function is as follows. Catalyzes the interconversion of methylthioribose-1-phosphate (MTR-1-P) into methylthioribulose-1-phosphate (MTRu-1-P). This chain is Methylthioribose-1-phosphate isomerase, found in Bos taurus (Bovine).